We begin with the raw amino-acid sequence, 328 residues long: MAKHVKVAVTGAAGQIGYALLFRLASGQAFGLDTTVDLHLLEIEPALPALKGVVMELEDCAFPLLRNMVVTSDPRVAFNDVNWALLVGAAPRKAGMERKDLLEKNGSIFAGQGKAINENAASDVRIFVVGNPCNTNCLIAMNNAPDIPKDRFYAMTRLDQNRAIGQLALKAGVDVPSVKNMIIWGNHSSTQYPDFYHATIDGKPATEVIRDKNWLLNDFISVIQQRGAAVIKARGASSAASAANAALDSVWSLINTTPADDNYSVALCAQGQYGVDEGLIFSFPCRTENGVVSVIEEIEHNEFGQQKLKETLDELREERDAVEALGLI.

NAD(+) is bound at residue 11–17; it reads GAAGQIG. Positions 92 and 98 each coordinate substrate. NAD(+)-binding positions include asparagine 105, glutamine 112, and 129 to 131; that span reads VGN. Positions 131 and 162 each coordinate substrate. Catalysis depends on histidine 187, which acts as the Proton acceptor.

Belongs to the LDH/MDH superfamily. MDH type 2 family.

It carries out the reaction (S)-malate + NAD(+) = oxaloacetate + NADH + H(+). In terms of biological role, catalyzes the reversible oxidation of malate to oxaloacetate. The sequence is that of Malate dehydrogenase from Coxiella burnetii (strain RSA 493 / Nine Mile phase I).